The chain runs to 427 residues: Large ribosomal subunit protein uL4 (427 aa).

Ala-2 carries the N-acetylalanine modification. Lys-14 is subject to N6-acetyllysine. Residue Arg-97 is modified to Omega-N-methylarginine. N6-acetyllysine is present on Lys-106. Lys-239 participates in a covalent cross-link: Glycyl lysine isopeptide (Lys-Gly) (interchain with G-Cter in SUMO2). An N6-acetyllysine modification is found at Lys-259. Residue Thr-266 is modified to Phosphothreonine. 2 positions are modified to phosphoserine: Ser-290 and Ser-295. The residue at position 300 (Arg-300) is a Citrulline. Residue Lys-327 forms a Glycyl lysine isopeptide (Lys-Gly) (interchain with G-Cter in SUMO2) linkage. Lys-333 and Lys-353 each carry N6-acetyllysine. An N6-acetyllysine; alternate modification is found at Lys-364. Lys-364 participates in a covalent cross-link: Glycyl lysine isopeptide (Lys-Gly) (interchain with G-Cter in SUMO1); alternate. Phosphoserine is present on Ser-365. The disordered stretch occupies residues 369–427; that stretch reads AAVAGKKPVVGKKGKKAAVGVKKQKKPLVGKKAAATKKPAPEKKPAEKKPTTEEKKPAA. The segment covering 377–397 has biased composition (basic residues); sequence VVGKKGKKAAVGVKKQKKPLV. Over residues 407 to 427 the composition is skewed to basic and acidic residues; that stretch reads PAPEKKPAEKKPTTEEKKPAA.

The protein belongs to the universal ribosomal protein uL4 family. In terms of assembly, component of the large ribosomal subunit. May bind IPO9 with low affinity. Interacts with RBM3. Citrullinated by PADI4.

The protein localises to the cytoplasm. In terms of biological role, component of the large ribosomal subunit. The ribosome is a large ribonucleoprotein complex responsible for the synthesis of proteins in the cell. This Homo sapiens (Human) protein is Large ribosomal subunit protein uL4 (RPL4).